Here is a 673-residue protein sequence, read N- to C-terminus: UvrABC system protein B (673 aa).

The Helicase ATP-binding domain occupies 26-414 (EGLEDGLAHQ…GGDVVDQVVR (389 aa)). 39–46 (GVTGSGKT) serves as a coordination point for ATP. The Beta-hairpin motif lies at 92–115 (YYDYYQPEAYVPSSDTFIEKDASV). Residues 431–597 (QVDDLLSEIR…GLNKKVVDIL (167 aa)) enclose the Helicase C-terminal domain. A UVR domain is found at 633 to 668 (LQKIHELEGLMMQHAQNLEFEEAAQIRDQLHQLREL).

This sequence belongs to the UvrB family. In terms of assembly, forms a heterotetramer with UvrA during the search for lesions. Interacts with UvrC in an incision complex.

The protein resides in the cytoplasm. In terms of biological role, the UvrABC repair system catalyzes the recognition and processing of DNA lesions. A damage recognition complex composed of 2 UvrA and 2 UvrB subunits scans DNA for abnormalities. Upon binding of the UvrA(2)B(2) complex to a putative damaged site, the DNA wraps around one UvrB monomer. DNA wrap is dependent on ATP binding by UvrB and probably causes local melting of the DNA helix, facilitating insertion of UvrB beta-hairpin between the DNA strands. Then UvrB probes one DNA strand for the presence of a lesion. If a lesion is found the UvrA subunits dissociate and the UvrB-DNA preincision complex is formed. This complex is subsequently bound by UvrC and the second UvrB is released. If no lesion is found, the DNA wraps around the other UvrB subunit that will check the other stand for damage. The protein is UvrABC system protein B of Shigella dysenteriae serotype 1 (strain Sd197).